We begin with the raw amino-acid sequence, 626 residues long: 1-deoxy-D-xylulose-5-phosphate synthase 2 (626 aa).

Thiamine diphosphate contacts are provided by residues histidine 74 and 115-117 (GHA). Aspartate 146 lines the Mg(2+) pocket. Thiamine diphosphate contacts are provided by residues 147–148 (GS), asparagine 175, phenylalanine 286, and glutamate 368. Asparagine 175 contributes to the Mg(2+) binding site.

The protein belongs to the transketolase family. DXPS subfamily. Homodimer. It depends on Mg(2+) as a cofactor. Thiamine diphosphate is required as a cofactor.

The enzyme catalyses D-glyceraldehyde 3-phosphate + pyruvate + H(+) = 1-deoxy-D-xylulose 5-phosphate + CO2. Its pathway is metabolic intermediate biosynthesis; 1-deoxy-D-xylulose 5-phosphate biosynthesis; 1-deoxy-D-xylulose 5-phosphate from D-glyceraldehyde 3-phosphate and pyruvate: step 1/1. In terms of biological role, catalyzes the acyloin condensation reaction between C atoms 2 and 3 of pyruvate and glyceraldehyde 3-phosphate to yield 1-deoxy-D-xylulose-5-phosphate (DXP). The polypeptide is 1-deoxy-D-xylulose-5-phosphate synthase 2 (Geobacter sulfurreducens (strain ATCC 51573 / DSM 12127 / PCA)).